The primary structure comprises 200 residues: Dephospho-CoA kinase (200 aa).

The DPCK domain occupies 3–200 (RIGLTGGIGS…LIAEILSRVN (198 aa)). An ATP-binding site is contributed by 11 to 16 (GSGKST).

This sequence belongs to the CoaE family.

It localises to the cytoplasm. The catalysed reaction is 3'-dephospho-CoA + ATP = ADP + CoA + H(+). It participates in cofactor biosynthesis; coenzyme A biosynthesis; CoA from (R)-pantothenate: step 5/5. In terms of biological role, catalyzes the phosphorylation of the 3'-hydroxyl group of dephosphocoenzyme A to form coenzyme A. This is Dephospho-CoA kinase from Corynebacterium glutamicum (strain ATCC 13032 / DSM 20300 / JCM 1318 / BCRC 11384 / CCUG 27702 / LMG 3730 / NBRC 12168 / NCIMB 10025 / NRRL B-2784 / 534).